Consider the following 1096-residue polypeptide: Carbamoyl phosphate synthase large chain (1096 aa).

The interval Met1–Glu402 is carboxyphosphate synthetic domain. 12 residues coordinate ATP: Arg129, Arg169, Gly175, Gly176, Glu208, Ile210, Glu215, Gly241, Val242, His243, Gln285, and Glu299. The ATP-grasp 1 domain maps to Lys133–Ile328. The Mg(2+) site is built by Gln285, Glu299, and Asn301. The Mn(2+) site is built by Gln285, Glu299, and Asn301. Residues Lys403 to Ile547 are oligomerization domain. Residues Val548–Phe950 form a carbamoyl phosphate synthetic domain region. An ATP-grasp 2 domain is found at Ser676 to Val870. ATP-binding residues include Arg712, Arg754, Leu756, Glu761, Gly786, Ile787, His788, Ser789, Gln829, and Glu841. 3 residues coordinate Mg(2+): Gln829, Glu841, and Asn843. The Mn(2+) site is built by Gln829, Glu841, and Asn843. The 145-residue stretch at Gly951–Arg1095 folds into the MGS-like domain. The interval Gly951 to Arg1096 is allosteric domain.

Belongs to the CarB family. As to quaternary structure, composed of two chains; the small (or glutamine) chain promotes the hydrolysis of glutamine to ammonia, which is used by the large (or ammonia) chain to synthesize carbamoyl phosphate. Tetramer of heterodimers (alpha,beta)4. Mg(2+) is required as a cofactor. The cofactor is Mn(2+).

The catalysed reaction is hydrogencarbonate + L-glutamine + 2 ATP + H2O = carbamoyl phosphate + L-glutamate + 2 ADP + phosphate + 2 H(+). It catalyses the reaction hydrogencarbonate + NH4(+) + 2 ATP = carbamoyl phosphate + 2 ADP + phosphate + 2 H(+). Its pathway is amino-acid biosynthesis; L-arginine biosynthesis; carbamoyl phosphate from bicarbonate: step 1/1. The protein operates within pyrimidine metabolism; UMP biosynthesis via de novo pathway; (S)-dihydroorotate from bicarbonate: step 1/3. Functionally, large subunit of the glutamine-dependent carbamoyl phosphate synthetase (CPSase). CPSase catalyzes the formation of carbamoyl phosphate from the ammonia moiety of glutamine, carbonate, and phosphate donated by ATP, constituting the first step of 2 biosynthetic pathways, one leading to arginine and/or urea and the other to pyrimidine nucleotides. The large subunit (synthetase) binds the substrates ammonia (free or transferred from glutamine from the small subunit), hydrogencarbonate and ATP and carries out an ATP-coupled ligase reaction, activating hydrogencarbonate by forming carboxy phosphate which reacts with ammonia to form carbamoyl phosphate. In Clavibacter sepedonicus (Clavibacter michiganensis subsp. sepedonicus), this protein is Carbamoyl phosphate synthase large chain.